The sequence spans 190 residues: dCTP deaminase, dUMP-forming (190 aa).

DCTP contacts are provided by residues 101 to 106 (KSSLGR), D119, 127 to 129 (TLE), Q148, Y162, and Q174. E129 acts as the Proton donor/acceptor in catalysis. The tract at residues 161-190 (PYGSSSVGSKYQGQRGPTPSRSYQNFVKND) is disordered. Polar residues predominate over residues 163 to 190 (GSSSVGSKYQGQRGPTPSRSYQNFVKND).

This sequence belongs to the dCTP deaminase family. In terms of assembly, homotrimer.

The catalysed reaction is dCTP + 2 H2O = dUMP + NH4(+) + diphosphate. It participates in pyrimidine metabolism; dUMP biosynthesis; dUMP from dCTP: step 1/1. Bifunctional enzyme that catalyzes both the deamination of dCTP to dUTP and the hydrolysis of dUTP to dUMP without releasing the toxic dUTP intermediate. In Mycolicibacterium vanbaalenii (strain DSM 7251 / JCM 13017 / BCRC 16820 / KCTC 9966 / NRRL B-24157 / PYR-1) (Mycobacterium vanbaalenii), this protein is dCTP deaminase, dUMP-forming.